Consider the following 64-residue polypeptide: MALSKMADLKNLSVDEIDAKVQELKKELFDLRFQKATKETIQPHRFKHIRHEIAQLLTLKQQQS.

It belongs to the universal ribosomal protein uL29 family.

The chain is Large ribosomal subunit protein uL29 from Acaryochloris marina (strain MBIC 11017).